We begin with the raw amino-acid sequence, 199 residues long: MRAVIIDYGVGNLFSIYSGLRRVGFEVEISKEPKGSEDLIVFPGVGSFSAVSKYLVARKEKFEVLRSNGTGFLGICLGMQIMFEEGTEGGLNKGLGWLKGRVDKINHPRVKIPHIGWDKVNVIKYNELSEGIDDQYVYYAHSYVAYPTDKSVILSTTSYGIDYPAVVNIGNIVGTQFHPEKSSLVGRKFLTNVYRWLRK.

One can recognise a Glutamine amidotransferase type-1 domain in the interval 2-199 (RAVIIDYGVG…LTNVYRWLRK (198 aa)). The active-site Nucleophile is Cys76. Catalysis depends on residues His178 and Glu180.

Heterodimer of HisH and HisF.

Its subcellular location is the cytoplasm. The enzyme catalyses 5-[(5-phospho-1-deoxy-D-ribulos-1-ylimino)methylamino]-1-(5-phospho-beta-D-ribosyl)imidazole-4-carboxamide + L-glutamine = D-erythro-1-(imidazol-4-yl)glycerol 3-phosphate + 5-amino-1-(5-phospho-beta-D-ribosyl)imidazole-4-carboxamide + L-glutamate + H(+). It catalyses the reaction L-glutamine + H2O = L-glutamate + NH4(+). It functions in the pathway amino-acid biosynthesis; L-histidine biosynthesis; L-histidine from 5-phospho-alpha-D-ribose 1-diphosphate: step 5/9. Functionally, IGPS catalyzes the conversion of PRFAR and glutamine to IGP, AICAR and glutamate. The HisH subunit catalyzes the hydrolysis of glutamine to glutamate and ammonia as part of the synthesis of IGP and AICAR. The resulting ammonia molecule is channeled to the active site of HisF. The protein is Imidazole glycerol phosphate synthase subunit HisH of Sulfolobus acidocaldarius (strain ATCC 33909 / DSM 639 / JCM 8929 / NBRC 15157 / NCIMB 11770).